The primary structure comprises 317 residues: Probable cell division protein WhiA (317 aa).

The segment at residues 275–308 (SLKELGEMLVPKVGKSGVNHRMRKIDELAEKLEE) is a DNA-binding region (H-T-H motif).

Belongs to the WhiA family.

In terms of biological role, involved in cell division and chromosome segregation. In Desulfitobacterium hafniense (strain Y51), this protein is Probable cell division protein WhiA.